A 252-amino-acid polypeptide reads, in one-letter code: Probable NADP-dependent dehydrogenase HI_1430 (252 aa).

7 to 31 (LVTGATAGFGLAICKKLIEAGYKVI) lines the NADP(+) pocket. Serine 137 serves as a coordination point for substrate. Catalysis depends on tyrosine 150, which acts as the Proton acceptor.

This sequence belongs to the short-chain dehydrogenases/reductases (SDR) family.

This chain is Probable NADP-dependent dehydrogenase HI_1430, found in Haemophilus influenzae (strain ATCC 51907 / DSM 11121 / KW20 / Rd).